The chain runs to 620 residues: MAU2 chromatid cohesion factor homolog (620 aa).

TPR repeat units lie at residues 452–485 and 492–525; these read GGFY…ANAE and SCSL…ASKI.

The protein belongs to the SCC4/mau-2 family. In terms of assembly, interacts with Nipped-B to form the cohesin loading complex.

The protein localises to the nucleus. It is found in the nucleoplasm. Required for association of the cohesin complex with chromatin during interphase. Plays a role in sister chromatid cohesion and normal progression through prometaphase. This Drosophila persimilis (Fruit fly) protein is MAU2 chromatid cohesion factor homolog.